A 200-amino-acid polypeptide reads, in one-letter code: Coiled-coil domain-containing protein 28B (200 aa).

Methionine 1 is modified (N-acetylmethionine). A compositionally biased stretch (basic residues) spans 1-10; that stretch reads MEDKKKKRSP. Residues 1–49 form a disordered region; sequence MEDKKKKRSPKPCLTQPAQAPGTLRRVPVPTSHSGSLALGLPHLPSPKQ. 2 positions are modified to phosphoserine: serine 46 and serine 115. Acidic residues predominate over residues 140 to 152; it reads GEEEDEEEEEDGV. Positions 140 to 165 are disordered; sequence GEEEDEEEEEDGVTEGLPEEQKKTMA. The stretch at 158–189 forms a coiled coil; it reads EEQKKTMADRNLDQLLSNLEDLSNSIQKLHLA.

In terms of assembly, interacts with BBS1, BBS2, BBS4, BBS5, BBS6, BBS7 and TTC8/BBS8. Interacts with MAPKAP1/SIN1 isoform 1 and RICTOR. As to expression, expressed in the retina, pericardium and limb epithelium.

The protein localises to the cytoplasm. It is found in the cytoskeleton. Its subcellular location is the microtubule organizing center. It localises to the centrosome. In terms of biological role, involved in ciliogenesis. Regulates cilia length through its interaction with MAPKAP1/SIN1 but independently of mTORC2 complex. Modulates mTORC2 complex assembly and function, possibly enhances AKT1 phosphorylation. Does not seem to modulate assembly and function of mTORC1 complex. This Mus musculus (Mouse) protein is Coiled-coil domain-containing protein 28B (Ccdc28b).